A 467-amino-acid polypeptide reads, in one-letter code: Tripartite motif-containing protein 75 (467 aa).

The RING-type zinc-finger motif lies at 16 to 57; the sequence is CPICLDDLTDPVTVECGHNFCRSCIKDFWAGQQATSSCPVCR. The B box-type zinc-finger motif lies at 90-131; sequence ESSTSCERHNQALTLFCEDDLQLLCDQCVEPESHGRHQVLSI. Residues Cys-95, His-98, Cys-117, and His-123 each contribute to the Zn(2+) site. Positions 168 to 222 form a coiled coil; sequence VTLREQAEAQRSQLTSECEKLMRFLDQEERAAFSRLEDEEMRLEKRLLDNIAALE. The 191-residue stretch at 276–466 folds into the B30.2/SPRY domain; it reads YSFPLQYSAL…LRLCSATDSE (191 aa).

It belongs to the TRIM/RBCC family.

It is found in the cytoplasm. The protein localises to the cytoskeleton. Its subcellular location is the spindle. Its function is as follows. May play a role in female meiosis. In Mus musculus (Mouse), this protein is Tripartite motif-containing protein 75.